Here is a 325-residue protein sequence, read N- to C-terminus: Forkhead box protein B1 (325 aa).

The segment at residues 12–103 is a DNA-binding region (fork-head); the sequence is QKPPYSYISL…GDMFENGSFL (92 aa). Residues 284–309 are compositionally biased toward low complexity; that stretch reads LSNSPPSLSPTSSQTATSQSSPATPS. The interval 284–325 is disordered; it reads LSNSPPSLSPTSSQTATSQSSPATPSETLTSPASALHSVAVH.

It localises to the nucleus. Its function is as follows. Transcription factor expressed by neural progenitor cells in specific regions of the embryonic neuroepithelium. Essential for the mammillary nuclei maintenance. Negatively regulates the proliferation of oligodendrocyte progenitors and promotes oligodendrocyte maturation. Also expressed in mammary glands, plays a role in lactation, controls development of mammary glands and the inferior colliculi of the midbrain in the central nervous system that regulates the milk-ejection reflex. The chain is Forkhead box protein B1 (FOXB1) from Homo sapiens (Human).